A 491-amino-acid chain; its full sequence is Nicotinamide phosphoribosyltransferase (491 aa).

N-acetylmethionine is present on Met-1. At Tyr-188 the chain carries Phosphotyrosine. Position 196 (Arg-196) interacts with diphosphate. Asp-219 contacts beta-nicotinamide D-ribonucleotide. Positions 247 and 311 each coordinate diphosphate. Beta-nicotinamide D-ribonucleotide-binding positions include 311 to 313 (RPD), 353 to 354 (GD), Gly-384, and Arg-392. Ser-472 carries the post-translational modification Phosphoserine.

The protein belongs to the NAPRTase family. In terms of assembly, homodimer. In terms of tissue distribution, ubiquitously expressed in lymphoid and non-lymphoid tissues.

The protein resides in the nucleus. It localises to the cytoplasm. It is found in the secreted. The catalysed reaction is beta-nicotinamide D-ribonucleotide + diphosphate = 5-phospho-alpha-D-ribose 1-diphosphate + nicotinamide + H(+). Its pathway is cofactor biosynthesis; NAD(+) biosynthesis; nicotinamide D-ribonucleotide from 5-phospho-alpha-D-ribose 1-diphosphate and nicotinamide: step 1/1. The secreted form behaves both as a cytokine with immunomodulating properties and an adipokine with anti-diabetic properties, it has no enzymatic activity, partly because of lack of activation by ATP, which has a low level in extracellular space and plasma. Catalyzes the condensation of nicotinamide with 5-phosphoribosyl-1-pyrophosphate to yield nicotinamide mononucleotide, an intermediate in the biosynthesis of NAD. It is the rate limiting component in the mammalian NAD biosynthesis pathway. Plays a role in the modulation of circadian clock function. NAMPT-dependent oscillatory production of NAD regulates oscillation of clock target gene expression by releasing the core clock component: CLOCK-BMAL1 heterodimer from NAD-dependent SIRT1-mediated suppression. The protein is Nicotinamide phosphoribosyltransferase (Nampt) of Mus musculus (Mouse).